The sequence spans 618 residues: Ubiquitin carboxyl-terminal hydrolase 2 (618 aa).

The interval 1–213 (MSQLSSTLKR…RSEYLTDYLE (213 aa)) is necessary for interaction with MDM4. Disordered stretches follow at residues 54–112 (VSPT…GGSG) and 246–274 (RYTL…MNSK). Residues 90–100 (KRSESQTRGNE) are compositionally biased toward basic and acidic residues. Residues 255–274 (GQASGPSRSTSPGRDTMNSK) show a composition bias toward polar residues. Positions 280 to 612 (AGLRNLGNTC…DAYLLFYELA (333 aa)) constitute a USP domain. The Nucleophile role is filled by Cys-289. Residues 416 to 516 (YLEREDSRIG…FPKILVLHLK (101 aa)) are necessary for interaction with MDM4. Zn(2+)-binding residues include Cys-438, Cys-441, Cys-489, and Cys-492. His-570 (proton acceptor) is an active-site residue.

The protein belongs to the peptidase C19 family. USP2 subfamily. In terms of assembly, homooligomer. Found in trimeric complex with MDM2 and MDM4 and USP2. Interacts with CCND1; the interaction is direct and promotes its stabilization by antagonizing ubiquitin-dependent degradation. Interacts (via N-terminus and C-terminus) with MDM2. Interacts with MDM4. Interacts with PER1. Interacts with KCNQ1; counteracts the NEDD4L-specific down-regulation of I(Ks) and restores plasma membrane localization of KCNQ1. Isoform 4: Interacts with NHERF4 and CLTC. In terms of tissue distribution, expressed in mesangial cells of the kidney. Isoform 1 and isoform 2 are expressed in elongated spermatids; the shorter form appearing earlier than the longer form (at protein level). Isoform 1 and isoform 2 are expressed in early round spermatids of the testis. Isoform 1 is expressed in muscle and heart. Isoform 2 is expressed in muscle, lung, heart, brain, liver and ovary. During muscle differentiation, isoform 1 expression increases before the onset of membrane fusion and decreases as the myogenic processes proceeded; un counterpart, isoform 2 expression remains low until the burst of membrane fusion but increases thereafter.

It is found in the cytoplasm. The protein localises to the perinuclear region. It localises to the nucleus. The protein resides in the membrane. It catalyses the reaction Thiol-dependent hydrolysis of ester, thioester, amide, peptide and isopeptide bonds formed by the C-terminal Gly of ubiquitin (a 76-residue protein attached to proteins as an intracellular targeting signal).. With respect to regulation, cleavage is inhibited by ubiquitin in a dosage-dependent manner. Cleavage is blocked by ubiquitin aldehyde. In terms of biological role, hydrolase that deubiquitinates polyubiquitinated target proteins such as MDM2, MDM4 and CCND1. Isoform 1 and isoform 2 possess both ubiquitin-specific peptidase and isopeptidase activities. Deubiquitinates MDM2 without reversing MDM2-mediated p53/TP53 ubiquitination and thus indirectly promotes p53/TP53 degradation and limits p53 activity. Has no deubiquitinase activity against p53/TP53. Prevents MDM2-mediated degradation of MDM4. Plays a role in the G1/S cell-cycle progression in normal and cancer cells. Regulates the circadian clock by modulating its intrinsic circadian rhythm and its capacity to respond to external cues. Associates with clock proteins and deubiquitinates core clock component PER1 but does not affect its overall stability. Regulates the nucleocytoplasmic shuttling and nuclear retention of PER1 and its repressive role on the clock transcription factors CLOCK and BMAL1. Plays a role in the regulation of myogenic differentiation of embryonic muscle cells. Circadian clock output effector that regulates Ca(2+) absorption in the small intestine. Probably functions by regulating protein levels of the membrane scaffold protein NHERF4 in a rhythmic manner, and is therefore likely to control Ca(2+) membrane permeability mediated by the Ca(2+) channel TRPV6 in the intestine. The polypeptide is Ubiquitin carboxyl-terminal hydrolase 2 (Usp2) (Rattus norvegicus (Rat)).